A 109-amino-acid chain; its full sequence is uncharacterized protein (109 aa).

The disordered stretch occupies residues 67–96 (YFGNKLWRPTPRSGQSGQSRPKTGPHGSQR). Residues 78–87 (RSGQSGQSRP) show a composition bias toward polar residues.

This is an uncharacterized protein from Saccharomyces cerevisiae (strain ATCC 204508 / S288c) (Baker's yeast).